We begin with the raw amino-acid sequence, 256 residues long: Spheroidene monooxygenase (256 aa).

A compositionally biased stretch (low complexity) spans 1-23 (MTNELSNAAGASQQGPAASSFSA). The tract at residues 1–26 (MTNELSNAAGASQQGPAASSFSADTP) is disordered.

This sequence belongs to the CrtA family. Requires heme as cofactor.

The catalysed reaction is spheroidene + 4 reduced [2Fe-2S]-[ferredoxin] + 2 O2 + 4 H(+) = spheroiden-2-one + 4 oxidized [2Fe-2S]-[ferredoxin] + 3 H2O. It catalyses the reaction spirilloxanthin + 4 reduced [2Fe-2S]-[ferredoxin] + 2 O2 + 4 H(+) = 2-oxospirilloxanthin + 4 oxidized [2Fe-2S]-[ferredoxin] + 3 H2O. It carries out the reaction 2-oxospirilloxanthin + 4 reduced [2Fe-2S]-[ferredoxin] + 2 O2 + 4 H(+) = 2,2'-dioxospirilloxanthin + 4 oxidized [2Fe-2S]-[ferredoxin] + 3 H2O. The enzyme catalyses spheroidene + 2 reduced [2Fe-2S]-[ferredoxin] + O2 + 2 H(+) = 2-hydroxyspheroidene + 2 oxidized [2Fe-2S]-[ferredoxin] + H2O. The catalysed reaction is 2-hydroxyspheroidene + 2 reduced [2Fe-2S]-[ferredoxin] + O2 + 2 H(+) = 2,2-dihydroxyspheroidene + 2 oxidized [2Fe-2S]-[ferredoxin] + H2O. It catalyses the reaction 2,2-dihydroxyspheroidene = spheroiden-2-one + H2O. It carries out the reaction spirilloxanthin + 2 reduced [2Fe-2S]-[ferredoxin] + O2 + 2 H(+) = 2-hydroxyspirilloxanthin + 2 oxidized [2Fe-2S]-[ferredoxin] + H2O. The enzyme catalyses 2-hydroxyspirilloxanthin + 2 reduced [2Fe-2S]-[ferredoxin] + O2 + 2 H(+) = 2,2-dihydroxyspirilloxanthin + 2 oxidized [2Fe-2S]-[ferredoxin] + H2O. The catalysed reaction is 2,2-dihydroxyspirilloxanthin = 2-oxospirilloxanthin + H2O. It catalyses the reaction 2-oxospirilloxanthin + 2 reduced [2Fe-2S]-[ferredoxin] + O2 + 2 H(+) = 2'-hydroxy-2-oxospirilloxanthin + 2 oxidized [2Fe-2S]-[ferredoxin] + H2O. It carries out the reaction 2'-hydroxy-2-oxospirilloxanthin + 2 reduced [2Fe-2S]-[ferredoxin] + O2 + 2 H(+) = 2',2'-dihydroxy-2-oxospirilloxanthin + 2 oxidized [2Fe-2S]-[ferredoxin] + H2O. The enzyme catalyses 2',2'-dihydroxy-2-oxospirilloxanthin = 2,2'-dioxospirilloxanthin + H2O. It functions in the pathway carotenoid biosynthesis; spheroidene biosynthesis. Its pathway is carotenoid biosynthesis; spirilloxanthin biosynthesis. Functionally, involved in the biosynthesis of the carotenoids spheroidene and spirilloxanthin. Catalyzes the introduction of one keto group at the C-2 position of spheroidene and two keto groups at the C-2 and C-2' positions of spirilloxanthin. The chain is Spheroidene monooxygenase from Rubrivivax gelatinosus (Rhodocyclus gelatinosus).